A 101-amino-acid polypeptide reads, in one-letter code: MKFKYLSTPLLFSALLFSACSSVNVGANLKSLIKETTDQDLDLSESVSTSEGKKNLISSLKKSYETNPSKTASVLLNAWKQSVENGQIESSETNWTNWKFP.

The signal sequence occupies residues 1 to 19 (MKFKYLSTPLLFSALLFSA). A lipid anchor (N-palmitoyl cysteine) is attached at C20. C20 is lipidated: S-diacylglycerol cysteine.

The protein belongs to the MG439/MG440 family.

The protein localises to the cell membrane. This is an uncharacterized protein from Mycoplasma pneumoniae (strain ATCC 29342 / M129 / Subtype 1) (Mycoplasmoides pneumoniae).